The chain runs to 281 residues: ATP phosphoribosyltransferase (281 aa).

It belongs to the ATP phosphoribosyltransferase family. Long subfamily. It depends on Mg(2+) as a cofactor.

It localises to the cytoplasm. It carries out the reaction 1-(5-phospho-beta-D-ribosyl)-ATP + diphosphate = 5-phospho-alpha-D-ribose 1-diphosphate + ATP. Its pathway is amino-acid biosynthesis; L-histidine biosynthesis; L-histidine from 5-phospho-alpha-D-ribose 1-diphosphate: step 1/9. Its activity is regulated as follows. Feedback inhibited by histidine. Its function is as follows. Catalyzes the condensation of ATP and 5-phosphoribose 1-diphosphate to form N'-(5'-phosphoribosyl)-ATP (PR-ATP). Has a crucial role in the pathway because the rate of histidine biosynthesis seems to be controlled primarily by regulation of HisG enzymatic activity. This chain is ATP phosphoribosyltransferase, found in Corynebacterium efficiens (strain DSM 44549 / YS-314 / AJ 12310 / JCM 11189 / NBRC 100395).